The primary structure comprises 420 residues: ATP phosphoribosyltransferase regulatory subunit (420 aa).

The protein belongs to the class-II aminoacyl-tRNA synthetase family. HisZ subfamily. As to quaternary structure, heteromultimer composed of HisG and HisZ subunits.

The protein localises to the cytoplasm. Its pathway is amino-acid biosynthesis; L-histidine biosynthesis; L-histidine from 5-phospho-alpha-D-ribose 1-diphosphate: step 1/9. Required for the first step of histidine biosynthesis. May allow the feedback regulation of ATP phosphoribosyltransferase activity by histidine. The sequence is that of ATP phosphoribosyltransferase regulatory subunit from Bacillus cereus (strain ZK / E33L).